We begin with the raw amino-acid sequence, 378 residues long: CST complex subunit STN1 (378 aa).

The interaction with CTC1 stretch occupies residues 8-195 (MECESSPREE…KVYDQPFRNP (188 aa)). A DNA-binding region (OB) is located at residues 64–165 (VDIMGAVISV…EICANIYYKV (102 aa)). Winged helix-turn-helix (wHTH) stretches follow at residues 201-305 (EALN…YVTT) and 306-378 (KDKD…YAAF).

The protein belongs to the STN1 family. Component of the CST complex, composed of TEN1/C17orf106, CTC1/C17orf68 and STN1; in the complex interacts directly with TEN1 and CTC1. Interacts with ACD/TPP1. Interacts with POT1 and POLA1.

It localises to the nucleus. The protein localises to the chromosome. It is found in the telomere. Component of the CST complex proposed to act as a specialized replication factor promoting DNA replication under conditions of replication stress or natural replication barriers such as the telomere duplex. The CST complex binds single-stranded DNA with high affinity in a sequence-independent manner, while isolated subunits bind DNA with low affinity by themselves. Initially the CST complex has been proposed to protect telomeres from DNA degradation. However, the CST complex has been shown to be involved in several aspects of telomere replication. The CST complex inhibits telomerase and is involved in telomere length homeostasis; it is proposed to bind to newly telomerase-synthesized 3' overhangs and to terminate telomerase action implicating the association with the ACD:POT1 complex thus interfering with its telomerase stimulation activity. The CST complex is also proposed to be involved in fill-in synthesis of the telomeric C-strand probably implicating recruitment and activation of DNA polymerase alpha. The CST complex facilitates recovery from many forms of exogenous DNA damage; seems to be involved in the re-initiation of DNA replication at repaired forks and/or dormant origins. Required for efficicient replication of the duplex region of the telomere. Promotes efficient replication of lagging-strand telomeres. Promotes general replication start following replication-fork stalling implicating new origin firing. May be in involved in C-strand fill-in during late S/G2 phase independent of its role in telomere duplex replication. The chain is CST complex subunit STN1 from Mus musculus (Mouse).